The primary structure comprises 244 residues: Phosphoadenosine 5'-phosphosulfate reductase (244 aa).

The active-site Nucleophile; cysteine thiosulfonate intermediate is the cysteine 239.

It belongs to the PAPS reductase family. CysH subfamily.

Its subcellular location is the cytoplasm. The catalysed reaction is [thioredoxin]-disulfide + sulfite + adenosine 3',5'-bisphosphate + 2 H(+) = [thioredoxin]-dithiol + 3'-phosphoadenylyl sulfate. It functions in the pathway sulfur metabolism; hydrogen sulfide biosynthesis; sulfite from sulfate: step 3/3. In terms of biological role, catalyzes the formation of sulfite from phosphoadenosine 5'-phosphosulfate (PAPS) using thioredoxin as an electron donor. In Salmonella schwarzengrund (strain CVM19633), this protein is Phosphoadenosine 5'-phosphosulfate reductase.